We begin with the raw amino-acid sequence, 526 residues long: Cytochrome P450 monooxygenase milC (526 aa).

A helical transmembrane segment spans residues 2 to 20; the sequence is AIHAAYIFIAATLIALYVA. Cys470 lines the heme pocket.

The protein belongs to the cytochrome P450 family. Heme serves as cofactor.

The protein localises to the membrane. The catalysed reaction is cordypyrone A + reduced [NADPH--hemoprotein reductase] + O2 = cordypyrone B + oxidized [NADPH--hemoprotein reductase] + H2O + H(+). It participates in secondary metabolite biosynthesis. Functionally, cytochrome P450 monooxygenase; part of the gene cluster that mediates the biosynthesis of cordypyrones A and B, 2 pyrones that show modest activities against pathogenic bacteria including methicillin-resistant Staphylococcus aureus (MRSA), Mycobacterium tuberculosis and Bacillus cereus. The HR-PKS milA catalyzes the formation of cordypyrones A via condensation of one acetate with 10 malonate units. Since milA lacks an enoyl reductase domain, the 2 beta-keto processing domains DH and KR of milA collaborate with the trans-enoyl reductase milB to catalyze the different levels of reduction. The cytochrome P450 monooxygenase milC then hydroxylates the C-22 of cordypyrones A to yield cordypyrones B. In Cordyceps militaris (strain CM01) (Caterpillar fungus), this protein is Cytochrome P450 monooxygenase milC.